Reading from the N-terminus, the 505-residue chain is L-carnitine/gamma-butyrobetaine antiporter (505 aa).

12 helical membrane-spanning segments follow: residues 10 to 30, 51 to 71, 92 to 112, 143 to 163, 195 to 215, 231 to 251, 263 to 283, 316 to 336, 347 to 367, 403 to 423, 446 to 466, and 475 to 495; these read IEPK…WLTV, WGWA…WLVF, IFMM…SIEI, GPLP…FFFV, FYLV…TPLV, LDAI…ACGL, SYLS…SFIM, WTVF…IFLA, LCFG…TVLG, LSTA…VTLI, LLVR…LLAL, and AIIA…LSFI.

This sequence belongs to the BCCT transporter (TC 2.A.15) family. CaiT subfamily. As to quaternary structure, homotrimer.

The protein resides in the cell inner membrane. It catalyses the reaction 4-(trimethylamino)butanoate(in) + (R)-carnitine(out) = 4-(trimethylamino)butanoate(out) + (R)-carnitine(in). It participates in amine and polyamine metabolism; carnitine metabolism. Functionally, catalyzes the exchange of L-carnitine for gamma-butyrobetaine. This is L-carnitine/gamma-butyrobetaine antiporter from Salmonella choleraesuis (strain SC-B67).